The following is a 363-amino-acid chain: Heme A synthase (363 aa).

The next 8 membrane-spanning stretches (helical) occupy residues 21–41, 107–127, 138–158, 174–194, 207–227, 268–288, 301–321, and 323–343; these read ALVR…VLVG, RLLA…FWVS, LVGI…MVAS, HLTL…GLAP, LAGF…LVAG, FVHR…MIAT, ATLL…TLLM, and VPLH…GFAA. Residue His270 participates in heme binding. His331 is a binding site for heme.

Belongs to the COX15/CtaA family. Type 2 subfamily. Interacts with CtaB. Heme b serves as cofactor.

Its subcellular location is the cell membrane. The enzyme catalyses Fe(II)-heme o + 2 A + H2O = Fe(II)-heme a + 2 AH2. Its pathway is porphyrin-containing compound metabolism; heme A biosynthesis; heme A from heme O: step 1/1. Its function is as follows. Catalyzes the conversion of heme O to heme A by two successive hydroxylations of the methyl group at C8. The first hydroxylation forms heme I, the second hydroxylation results in an unstable dihydroxymethyl group, which spontaneously dehydrates, resulting in the formyl group of heme A. The sequence is that of Heme A synthase from Mesorhizobium japonicum (strain LMG 29417 / CECT 9101 / MAFF 303099) (Mesorhizobium loti (strain MAFF 303099)).